Reading from the N-terminus, the 471-residue chain is Ribosome biogenesis protein YTM1 (471 aa).

A ubiquitin-like (UBL) domain region spans residues 10-92 (VTARFTTRDE…ETRLEVEYTR (83 aa)). WD repeat units lie at residues 119-158 (SRAG…LATS), 165-203 (GRIT…RTIT), and 210-249 (SHRW…NPVA). A disordered region spans residues 245–274 (ENPVAPSSLLPNSTAASNKRQKLSKPDRTV). Residues 253–262 (LLPNSTAASN) show a composition bias toward polar residues. 4 WD repeats span residues 285–325 (GHSS…CVDT), 327–366 (TTGH…TQIS), 372–412 (GHKN…TGGQ), and 436–471 (GHGE…ALGS). Positions 412 to 440 (QVGEGQQGESVHTIHRQGQSGPGKGHGEG) are disordered.

It belongs to the WD repeat WDR12/YTM1 family. Component of the NOP7 complex, composed of ERB1, NOP7 and YTM1. The complex is held together by ERB1, which interacts with NOP7 via its N-terminal domain and with YTM1 via a high-affinity interaction between the seven-bladed beta-propeller domains of the 2 proteins. The NOP7 complex associates with the 66S pre-ribosome. Interacts (via UBL domain) with MDN1 (via VWFA/MIDAS domain).

It is found in the nucleus. Its subcellular location is the nucleolus. The protein localises to the nucleoplasm. In terms of biological role, component of the NOP7 complex, which is required for maturation of the 25S and 5.8S ribosomal RNAs and formation of the 60S ribosome. The polypeptide is Ribosome biogenesis protein YTM1 (Phaeosphaeria nodorum (strain SN15 / ATCC MYA-4574 / FGSC 10173) (Glume blotch fungus)).